Consider the following 1632-residue polypeptide: uncharacterized protein (1632 aa).

Positions M1 to N15 are enriched in polar residues. The disordered stretch occupies residues M1–E23. The Cytoplasmic segment spans residues M1 to R63. A helical transmembrane segment spans residues V64–M86. The Extracellular segment spans residues T87–E1632. 2 N-linked (GlcNAc...) asparagine; by host glycosylation sites follow: N149 and N274. Residues E516 to G538 form a disordered region. Residues N654, N719, and N797 are each glycosylated (N-linked (GlcNAc...) asparagine; by host). The disordered stretch occupies residues I838 to D890. Composition is skewed to basic and acidic residues over residues K842 to G853 and G875 to D890. Residues N1012, N1031, N1261, N1339, N1511, and N1546 are each glycosylated (N-linked (GlcNAc...) asparagine; by host). The disordered stretch occupies residues P1603 to E1632. Over residues D1607–E1632 the composition is skewed to acidic residues.

Its subcellular location is the host membrane. This is an uncharacterized protein from Ostreid herpesvirus 1 (isolate France) (OsHV-1).